We begin with the raw amino-acid sequence, 204 residues long: Large ribosomal subunit protein uL4 (204 aa).

The tract at residues 49 to 76 is disordered; the sequence is KTKGISDVSGTTAKPYGQKRTGRARQGS.

This sequence belongs to the universal ribosomal protein uL4 family. In terms of assembly, part of the 50S ribosomal subunit.

Its function is as follows. One of the primary rRNA binding proteins, this protein initially binds near the 5'-end of the 23S rRNA. It is important during the early stages of 50S assembly. It makes multiple contacts with different domains of the 23S rRNA in the assembled 50S subunit and ribosome. Functionally, forms part of the polypeptide exit tunnel. This is Large ribosomal subunit protein uL4 from Wolbachia sp. subsp. Drosophila simulans (strain wRi).